Here is a 116-residue protein sequence, read N- to C-terminus: Non-specific lipid-transfer protein C, cotyledon-specific isoform (116 aa).

The signal sequence occupies residues 1 to 24 (MKNVVFSVLLLLSFLFCLANTNEA). Disulfide bonds link C28–C76, C38–C53, C54–C98, and C74–C112.

Belongs to the plant LTP family.

Functionally, plant non-specific lipid-transfer proteins transfer phospholipids as well as galactolipids across membranes. May play a role in wax or cutin deposition in the cell walls of expanding epidermal cells and certain secretory tissues. This chain is Non-specific lipid-transfer protein C, cotyledon-specific isoform, found in Ricinus communis (Castor bean).